The primary structure comprises 187 residues: Acireductone dioxygenase 4 (187 aa).

Position 2 is an N-acetylalanine (Ala-2). His-89, His-91, Glu-95, and His-134 together coordinate Fe(2+). Residues His-89, His-91, Glu-95, and His-134 each coordinate Ni(2+).

This sequence belongs to the acireductone dioxygenase (ARD) family. Requires Fe(2+) as cofactor. The cofactor is Ni(2+).

The protein resides in the cytoplasm. It is found in the nucleus. It carries out the reaction 1,2-dihydroxy-5-(methylsulfanyl)pent-1-en-3-one + O2 = 4-methylsulfanyl-2-oxobutanoate + formate + 2 H(+). The catalysed reaction is 1,2-dihydroxy-5-(methylsulfanyl)pent-1-en-3-one + O2 = 3-(methylsulfanyl)propanoate + CO + formate + 2 H(+). The protein operates within amino-acid biosynthesis; L-methionine biosynthesis via salvage pathway; L-methionine from S-methyl-5-thio-alpha-D-ribose 1-phosphate: step 5/6. Catalyzes 2 different reactions between oxygen and the acireductone 1,2-dihydroxy-3-keto-5-methylthiopentene (DHK-MTPene) depending upon the metal bound in the active site. Fe-containing acireductone dioxygenase (Fe-ARD) produces formate and 2-keto-4-methylthiobutyrate (KMTB), the alpha-ketoacid precursor of methionine in the methionine recycle pathway. Ni-containing acireductone dioxygenase (Ni-ARD) produces methylthiopropionate, carbon monoxide and formate, and does not lie on the methionine recycle pathway. In Arabidopsis thaliana (Mouse-ear cress), this protein is Acireductone dioxygenase 4 (ARD4).